The sequence spans 233 residues: Homeobox protein EMX1 (233 aa).

The homeobox DNA-binding region spans 135–194 (PKRIRTAFSPSQLLRLERAFEKNHYVVGAERKQLASSLSLSETQVKVWFQNRRTKYKRQK). The tract at residues 192–233 (RQKLEEEGPDSDQKKKGSHHINRWRLATKQPNGEDIDVTSND) is disordered. Over residues 193-206 (QKLEEEGPDSDQKK) the composition is skewed to basic and acidic residues.

This sequence belongs to the EMX homeobox family.

The protein localises to the nucleus. In terms of biological role, may function in combinations with OTX1/2 to specify cell fates in the developing central nervous system. The polypeptide is Homeobox protein EMX1 (emx1) (Xenopus tropicalis (Western clawed frog)).